The chain runs to 136 residues: Ergosterol biosynthetic protein 28 (136 aa).

Transmembrane regions (helical) follow at residues 18–34 (VVVSVAALFNTVQSFLT), 56–72 (FGIWTLLSAIVRFYCAY), 79–95 (VYFLCQCTYYLACFHFL), and 109–125 (GLLSPIVVSTVSIWFMA).

This sequence belongs to the ERG28 family. Heterotetramer of erg25, erg26, erg27 and erg28. Erg28 acts as a scaffold to tether erg27 and other 4,4-demethylation-related enzymes, forming a demethylation enzyme complex, in the endoplasmic reticulum.

The protein resides in the endoplasmic reticulum membrane. Its pathway is steroid metabolism; ergosterol biosynthesis. Part of the third module of ergosterol biosynthesis pathway that includes by the late steps of the pathway. Erg28 has a role as a scaffold to help anchor the catalytic components of the C-4 demethylation complex erg25, erg26 and erg27 to the endoplasmic reticulum. The third module or late pathway involves the ergosterol synthesis itself through consecutive reactions that mainly occur in the endoplasmic reticulum (ER) membrane. Firstly, the squalene synthase erg9 catalyzes the condensation of 2 farnesyl pyrophosphate moieties to form squalene, which is the precursor of all steroids. Secondly, squalene is converted into lanosterol by the consecutive action of the squalene epoxidase erg1 and the lanosterol synthase erg7. The lanosterol 14-alpha-demethylase erg11/cyp1 catalyzes C14-demethylation of lanosterol to produce 4,4'-dimethyl cholesta-8,14,24-triene-3-beta-ol. In the next steps, a complex process involving various demethylation, reduction and desaturation reactions catalyzed by the C-14 reductase erg24 and the C-4 demethylation complex erg25-erg26-erg27 leads to the production of zymosterol. Erg28 likely functions in the C-4 demethylation complex reaction by tethering erg26 and Erg27 to the endoplasmic reticulum or to facilitate interaction between these proteins. Then, the sterol 24-C-methyltransferase erg6 catalyzes the methyl transfer from S-adenosyl-methionine to the C-24 of zymosterol to form fecosterol. The C-8 sterol isomerase erg2 catalyzes the reaction which results in unsaturation at C-7 in the B ring of sterols and thus converts fecosterol to episterol. The sterol-C5-desaturases erg31 and erg32 then catalyze the introduction of a C-5 double bond in the B ring to produce 5-dehydroepisterol. The C-22 sterol desaturase erg5 further converts 5-dehydroepisterol into ergosta-5,7,22,24(28)-tetraen-3beta-ol by forming the C-22(23) double bond in the sterol side chain. Finally, ergosta-5,7,22,24(28)-tetraen-3beta-ol is substrate of the C-24(28) sterol reductase erg4 to produce ergosterol. In the genus Schizosaccharomyces, a second route exists between lanosterol and fecosterol, via the methylation of lanosterol to eburicol by erg6, followed by C14-demethylation by erg11/cyp1 and C4-demethylation by the demethylation complex erg25-erg26-erg27. In terms of biological role, extends the chronological lifespan when overexpressed. The polypeptide is Ergosterol biosynthetic protein 28 (Schizosaccharomyces pombe (strain 972 / ATCC 24843) (Fission yeast)).